The chain runs to 243 residues: Orotidine 5'-phosphate decarboxylase (243 aa).

Residues Asp18, Lys39, 66 to 75 (DLKFHDIPAT), Thr130, Arg192, Gln201, Gly221, and Arg222 each bind substrate. The active-site Proton donor is Lys68.

It belongs to the OMP decarboxylase family. Type 1 subfamily. In terms of assembly, homodimer.

The catalysed reaction is orotidine 5'-phosphate + H(+) = UMP + CO2. The protein operates within pyrimidine metabolism; UMP biosynthesis via de novo pathway; UMP from orotate: step 2/2. Its function is as follows. Catalyzes the decarboxylation of orotidine 5'-monophosphate (OMP) to uridine 5'-monophosphate (UMP). The chain is Orotidine 5'-phosphate decarboxylase from Synechococcus sp. (strain CC9902).